We begin with the raw amino-acid sequence, 392 residues long: 23S rRNA (uracil(747)-C(5))-methyltransferase RlmC (392 aa).

Residues C4, C12, C15, and C93 each contribute to the [4Fe-4S] cluster site. S-adenosyl-L-methionine contacts are provided by Q218, F247, E275, and N321. Residue C348 is the Nucleophile of the active site.

This sequence belongs to the class I-like SAM-binding methyltransferase superfamily. RNA M5U methyltransferase family. RlmC subfamily.

It carries out the reaction uridine(747) in 23S rRNA + S-adenosyl-L-methionine = 5-methyluridine(747) in 23S rRNA + S-adenosyl-L-homocysteine + H(+). Functionally, catalyzes the formation of 5-methyl-uridine at position 747 (m5U747) in 23S rRNA. This chain is 23S rRNA (uracil(747)-C(5))-methyltransferase RlmC, found in Haemophilus influenzae (strain PittEE).